The primary structure comprises 377 residues: O-phospho-L-seryl-tRNA:Cys-tRNA synthase (377 aa).

Residues 82-83, asparagine 189, and 212-214 contribute to the pyridoxal 5'-phosphate site; these read AR and SGH. Lysine 215 is modified (N6-(pyridoxal phosphate)lysine).

It belongs to the SepCysS family. As to quaternary structure, homodimer. Interacts with SepRS. Pyridoxal 5'-phosphate is required as a cofactor.

The enzyme catalyses O-phospho-L-seryl-tRNA(Cys) + hydrogen sulfide + H(+) = L-cysteinyl-tRNA(Cys) + phosphate. In terms of biological role, converts O-phospho-L-seryl-tRNA(Cys) (Sep-tRNA(Cys)) to L-cysteinyl-tRNA(Cys) (Cys-tRNA(Cys)). The protein is O-phospho-L-seryl-tRNA:Cys-tRNA synthase of Methanocaldococcus jannaschii (strain ATCC 43067 / DSM 2661 / JAL-1 / JCM 10045 / NBRC 100440) (Methanococcus jannaschii).